The chain runs to 362 residues: Phosphoserine aminotransferase (362 aa).

Arg-42 lines the L-glutamate pocket. Pyridoxal 5'-phosphate contacts are provided by residues 76–77 (AR), Trp-102, Thr-152, Asp-172, and Gln-195. Lys-196 is modified (N6-(pyridoxal phosphate)lysine). Pyridoxal 5'-phosphate is bound at residue 237–238 (NT).

It belongs to the class-V pyridoxal-phosphate-dependent aminotransferase family. SerC subfamily. Homodimer. The cofactor is pyridoxal 5'-phosphate.

It is found in the cytoplasm. It carries out the reaction O-phospho-L-serine + 2-oxoglutarate = 3-phosphooxypyruvate + L-glutamate. The catalysed reaction is 4-(phosphooxy)-L-threonine + 2-oxoglutarate = (R)-3-hydroxy-2-oxo-4-phosphooxybutanoate + L-glutamate. It participates in amino-acid biosynthesis; L-serine biosynthesis; L-serine from 3-phospho-D-glycerate: step 2/3. The protein operates within cofactor biosynthesis; pyridoxine 5'-phosphate biosynthesis; pyridoxine 5'-phosphate from D-erythrose 4-phosphate: step 3/5. Catalyzes the reversible conversion of 3-phosphohydroxypyruvate to phosphoserine and of 3-hydroxy-2-oxo-4-phosphonooxybutanoate to phosphohydroxythreonine. The sequence is that of Phosphoserine aminotransferase from Haemophilus influenzae (strain ATCC 51907 / DSM 11121 / KW20 / Rd).